Reading from the N-terminus, the 1158-residue chain is ATP-dependent helicase/deoxyribonuclease subunit B (1158 aa).

The UvrD-like helicase ATP-binding domain maps to 1 to 275; that stretch reads MTLHAYLGRA…QYFNQLYRFN (275 aa). Residue 8–15 participates in ATP binding; sequence GRAGTGKS. The region spanning 269–583 is the UvrD-like helicase C-terminal domain; that stretch reads NQLYRFNNQD…SIGTMDLAKV (315 aa). The [4Fe-4S] cluster site is built by Cys-784, Cys-1112, Cys-1115, and Cys-1121.

It belongs to the helicase family. AddB/RexB type 1 subfamily. In terms of assembly, heterodimer of AddA and AddB. Requires Mg(2+) as cofactor. [4Fe-4S] cluster is required as a cofactor.

Functionally, the heterodimer acts as both an ATP-dependent DNA helicase and an ATP-dependent, dual-direction single-stranded exonuclease. Recognizes the chi site generating a DNA molecule suitable for the initiation of homologous recombination. The AddB subunit has 5' -&gt; 3' nuclease activity but not helicase activity. The sequence is that of ATP-dependent helicase/deoxyribonuclease subunit B from Staphylococcus aureus (strain MRSA252).